The primary structure comprises 369 residues: Galactose-1-phosphate uridylyltransferase (369 aa).

Zn(2+) is bound by residues cysteine 54 and cysteine 57. UDP-alpha-D-glucose is bound by residues alanine 63 and 79–80 (ND). Position 127 (histidine 127) interacts with Zn(2+). Residue asparagine 172 coordinates UDP-alpha-D-glucose. Histidine 183 lines the Zn(2+) pocket. The active-site Tele-UMP-histidine intermediate is histidine 185. Residue glutamine 187 participates in UDP-alpha-D-glucose binding. Glutamate 201, histidine 300, histidine 317, and histidine 319 together coordinate Fe cation. Residues 332–335 (KFCV) and 337–338 (FE) each bind UDP-alpha-D-glucose.

It belongs to the galactose-1-phosphate uridylyltransferase type 1 family. Homodimer. Requires Zn(2+) as cofactor.

The catalysed reaction is alpha-D-galactose 1-phosphate + UDP-alpha-D-glucose = alpha-D-glucose 1-phosphate + UDP-alpha-D-galactose. The protein operates within carbohydrate metabolism; galactose metabolism. This Schizosaccharomyces pombe (strain 972 / ATCC 24843) (Fission yeast) protein is Galactose-1-phosphate uridylyltransferase (gal7).